Consider the following 205-residue polypeptide: Large ribosomal subunit protein uL4 (205 aa).

Residues 43 to 95 (RSGNRAQKDRAEVKHSTKKPWRQKGTGRARAGMTSSPLWRGGGRAFPNSPEEN) are disordered. Residues 48-57 (AQKDRAEVKH) are compositionally biased toward basic and acidic residues. Over residues 58-69 (STKKPWRQKGTG) the composition is skewed to basic residues.

It belongs to the universal ribosomal protein uL4 family. Part of the 50S ribosomal subunit.

Functionally, one of the primary rRNA binding proteins, this protein initially binds near the 5'-end of the 23S rRNA. It is important during the early stages of 50S assembly. It makes multiple contacts with different domains of the 23S rRNA in the assembled 50S subunit and ribosome. Forms part of the polypeptide exit tunnel. The sequence is that of Large ribosomal subunit protein uL4 from Bordetella pertussis (strain Tohama I / ATCC BAA-589 / NCTC 13251).